We begin with the raw amino-acid sequence, 443 residues long: Tol-Pal system protein TolB (443 aa).

The first 33 residues, 1-33 (MKIGIINTKIRTVFSAFACMIAASLVCTMPARA), serve as a signal peptide directing secretion.

This sequence belongs to the TolB family. The Tol-Pal system is composed of five core proteins: the inner membrane proteins TolA, TolQ and TolR, the periplasmic protein TolB and the outer membrane protein Pal. They form a network linking the inner and outer membranes and the peptidoglycan layer.

It localises to the periplasm. Part of the Tol-Pal system, which plays a role in outer membrane invagination during cell division and is important for maintaining outer membrane integrity. The chain is Tol-Pal system protein TolB from Brucella abortus (strain S19).